Reading from the N-terminus, the 355-residue chain is Guanine nucleotide-binding protein subunit alpha-14 (355 aa).

In terms of domain architecture, G-alpha spans 34 to 355 (RELKLLLLGT…QLNLREFNLV (322 aa)). The tract at residues 37–50 (KLLLLGTGESGKST) is G1 motif. GTP-binding positions include 42–49 (GTGESGKS), 176–182 (LRVRVPT), 201–205 (DVGGQ), 270–273 (NKKD), and A327. S49 contacts Mg(2+). Residues 174–182 (DVLRVRVPT) form a G2 motif region. The residue at position 179 (R179) is an ADP-ribosylarginine; by cholera toxin. Residue T182 coordinates Mg(2+). The tract at residues 197–206 (FRMVDVGGQR) is G3 motif. The G4 motif stretch occupies residues 266–273 (ILFLNKKD). The segment at 325 to 330 (TCATDT) is G5 motif.

Belongs to the G-alpha family. G(q) subfamily. G proteins are composed of 3 units; alpha, beta and gamma. The alpha chain contains the guanine nucleotide binding site.

In terms of biological role, guanine nucleotide-binding proteins (G proteins) are involved as modulators or transducers in various transmembrane signaling systems. This Homo sapiens (Human) protein is Guanine nucleotide-binding protein subunit alpha-14 (GNA14).